A 452-amino-acid chain; its full sequence is Cholesterol 7-desaturase nvd 2 (452 aa).

2 helical membrane-spanning segments follow: residues 6 to 26 (LIRITVMVITSERLLILMGLC) and 32 to 52 (FPVMIRVVFNAAVAIVIALVM). Residues 107–212 (WFKVADSTWI…CCEVDGMAYL (106 aa)) form the Rieske domain. The [2Fe-2S] cluster site is built by cysteine 148, histidine 150, cysteine 169, and histidine 172.

It belongs to the cholesterol 7-desaturase family. Requires [2Fe-2S] cluster as cofactor.

The protein localises to the membrane. The catalysed reaction is cholesterol + NADPH + O2 + H(+) = 7-dehydrocholesterol + NADP(+) + 2 H2O. The enzyme catalyses cholesterol + NADH + O2 + H(+) = 7-dehydrocholesterol + NAD(+) + 2 H2O. Its pathway is steroid hormone biosynthesis; dafachronic acid biosynthesis. Functionally, catalyzes the production of 7-dehydrocholesterol (7-DHC or cholesta-5,7-dien-3beta-ol) by inserting a double bond (desaturating) at the C7-C8 single bond of cholesterol. Essential regulator of steroid biosynthesis as this reaction is the first step in the synthesis of the steroid hormone Delta(7)-dafachronic acid. The sequence is that of Cholesterol 7-desaturase nvd 2 from Ciona intestinalis (Transparent sea squirt).